A 326-amino-acid polypeptide reads, in one-letter code: L-lactate dehydrogenase (326 aa).

Residue 39 to 60 coordinates NAD(+); sequence DVVTGMPEGKALDDSQATSIAD. Arginine 99, asparagine 131, and arginine 162 together coordinate substrate. Position 131 (asparagine 131) interacts with NAD(+). Histidine 186 acts as the Proton acceptor in catalysis.

It belongs to the LDH/MDH superfamily. LDH family. Homotetramer.

It carries out the reaction (S)-lactate + NAD(+) = pyruvate + NADH + H(+). It functions in the pathway fermentation; pyruvate fermentation to lactate; (S)-lactate from pyruvate: step 1/1. This is L-lactate dehydrogenase from Toxoplasma gondii.